The primary structure comprises 521 residues: CD166 antigen (521 aa).

The Extracellular portion of the chain corresponds to 1–465 (GSPVFIAFRS…NREKVNDQAK (465 aa)). Residues N29, N33, N105, N203, N244, N299, N395, N418, and N437 are each glycosylated (N-linked (GlcNAc...) asparagine). The 110-residue stretch at 63-172 (PTVVKVFKQP…YGPSGQKTVH (110 aa)) folds into the Ig-like V-type 2 domain. A disulfide bridge links C95 with C158. Ig-like C2-type domains follow at residues 183–266 (PTEQ…TAIT), 271–347 (DLSL…ESLT), and 354–439 (PQIK…LNVS). 3 cysteine pairs are disulfide-bonded: C208/C251, C292/C330, and C373/C423. Residues 466 to 487 (LIVGIVVGLLLAALVAGVVYWL) form a helical membrane-spanning segment. The Cytoplasmic segment spans residues 488–521 (YMKKSKTASKHVNKDLGNMEENKKLEENNHKTEA). The segment at 500-521 (NKDLGNMEENKKLEENNHKTEA) is disordered. Positions 507 to 521 (EENKKLEENNHKTEA) are enriched in basic and acidic residues.

Homodimer. Interacts (via extracellular domain) with CD6 (via extracellular domain). Homodimerization and interaction with CD6 involve the same region and cannot occur simultaneously. The affinity for CD6 is much higher than the affinity for self-association. Interacts (via glycosylated extracellular domain) with LGALS1 and LGALS3. Interaction with LGALS1 or LGALS3 inhibits interaction with CD6. In terms of processing, glycosylated.

It localises to the cell membrane. The protein localises to the cell projection. It is found in the axon. The protein resides in the dendrite. Functionally, cell adhesion molecule that mediates both heterotypic cell-cell contacts via its interaction with CD6, as well as homotypic cell-cell contacts. Promotes T-cell activation and proliferation via its interactions with CD6. Contributes to the formation and maturation of the immunological synapse via its interactions with CD6. Mediates homotypic interactions with cells that express ALCAM. Mediates attachment of dendritic cells onto endothelial cells via homotypic interaction. Inhibits endothelial cell migration and promotes endothelial tube formation via homotypic interactions. Required for normal organization of the lymph vessel network. Required for normal hematopoietic stem cell engraftment in the bone marrow. Plays a role in hematopoiesis; required for normal numbers of hematopoietic stem cells in bone marrow. Promotes in vitro osteoblast proliferation and differentiation. Promotes neurite extension, axon growth and axon guidance; axons grow preferentially on surfaces that contain ALCAM. Mediates outgrowth and pathfinding for retinal ganglion cell axons. This is CD166 antigen (ALCAM) from Oryctolagus cuniculus (Rabbit).